A 333-amino-acid chain; its full sequence is Protein APEM9 (333 aa).

At 1–90 the chain is on the cytoplasmic side; the sequence is MEATDIWGEI…ELRDVFGEVA (90 aa). A helical membrane pass occupies residues 91 to 102; the sequence is AIPVQVLLTGVC. The Peroxisomal segment spans residues 103-268; the sequence is LQISNGSYLG…KVGNTQFSMS (166 aa). Residues 269–285 traverse the membrane as a helical segment; the sequence is RGKVAVSLVGLIICYAL. Over 286-333 the chain is Cytoplasmic; that stretch reads KRKRAALIRIIRRQMESTRKAIVDFWKLAFSYQVNPLAAIQSIPSTTT.

Interacts with PEX6 and PEX19-1, but not with PEX1. Interacts (via N-terminus) with PEX13, and (via N-terminus and C-terminus) with PEX16. Expressed in roots, leaves, stems, flowers, buds and fruits.

It localises to the peroxisome membrane. Involved in peroxisome biogenesis and matrix protein import. Required for pollen maturation and in vivo germination via its role in peroxisomal function, which partially involves jasmonic acid biosynthesis. Transported to peroxisomes via the interaction with PEX19-1. Required for peroxisomal protein import by acting as an anchoring protein for the AAA ATPase complex, which consists of PEX1 and PEX6. In Arabidopsis thaliana (Mouse-ear cress), this protein is Protein APEM9.